Here is a 516-residue protein sequence, read N- to C-terminus: L-amino-acid oxidase (516 aa).

A signal peptide spans 1–18 (MNVFFMFSLLFLAALGSC). The cysteines at positions 28 and 189 are disulfide-linked. FAD contacts are provided by residues 61-62 (MA), 81-82 (EA), R89, and 103-106 (GPMR). Substrate-binding residues include R106 and H239. Position 279 (V279) interacts with FAD. C349 and C430 are joined by a disulfide. N-linked (GlcNAc...) asparagine glycosylation is present at N379. Y390 is a binding site for substrate. Residues E475 and 482 to 487 (GWIDST) each bind FAD. 482–483 (GW) contacts substrate.

This sequence belongs to the flavin monoamine oxidase family. FIG1 subfamily. Homodimer; non-covalently linked. FAD serves as cofactor. In terms of tissue distribution, expressed by the venom gland.

Its subcellular location is the secreted. The catalysed reaction is an L-alpha-amino acid + O2 + H2O = a 2-oxocarboxylate + H2O2 + NH4(+). Catalyzes an oxidative deamination of predominantly hydrophobic and aromatic L-amino acids, thus producing hydrogen peroxide that may contribute to the diverse toxic effects of this enzyme. Exhibits diverse biological activities, such as hemolysis, edema, hemorrhage, apoptosis, antibacterial and antiparasitic activities, as well as regulation of platelet aggregation. Effects of snake L-amino oxidases on platelets are controversial, since they either induce aggregation or inhibit agonist-induced aggregation. These different effects are probably due to different experimental conditions. This Crotalus adamanteus (Eastern diamondback rattlesnake) protein is L-amino-acid oxidase.